A 258-amino-acid polypeptide reads, in one-letter code: Regulatory protein RecX (258 aa).

Belongs to the RecX family.

Its subcellular location is the cytoplasm. Functionally, modulates RecA activity. In Streptococcus pyogenes serotype M12 (strain MGAS2096), this protein is Regulatory protein RecX.